The sequence spans 766 residues: Cytoplasmic polyadenylation element-binding protein 3 (766 aa).

Disordered stretches follow at residues 1 to 35 (MSQEEVPGEIPGDIAIEKAENTVQDDVEAKNTSET), 131 to 179 (VPSR…ARRL), and 216 to 299 (PVPI…LPPR). 2 stretches are compositionally biased toward polar residues: residues 233–256 (ETPTDSPAKTETSSISKSYGSDYQ) and 276–289 (STPNRGQGLSNRDN). One can recognise an RRM domain in the interval 310–332 (IFVGGVPWDITEAALKDSFGEFG). The segment at 578–602 (KAFSGPNRRSHLSSNSPSKPASLMS) is disordered. Over residues 589-602 (LSSNSPSKPASLMS) the composition is skewed to low complexity.

Cytoplasmic polyadenylation element binding protein that binds to and regulates the translation of specific mRNAs. This Caenorhabditis remanei (Caenorhabditis vulgaris) protein is Cytoplasmic polyadenylation element-binding protein 3 (cpb-3).